An 800-amino-acid chain; its full sequence is MSEIIQDLSLEDVLGDRFGRYSKYIIQERALPDVRDGLKPVQRRILYAMYSSGNTHDKNFRKSAKTVGDVIGQYHPHGDFSVYEAMVRLSQDWKLRHVLIEMHGNNGSIDNDPPAAMRYTEAKLSLLAEELLRDINKETVSFISNYDDTTLEPMVLPSRFPNLLVNGSTGISAGYATDIPPHNLAEVIQATLKYIDNPDITVNQLMKYIKGPDFPTGGIIQGIDGIKKAYESGKGRIIVRSKVEEETLRNGRKQLIITEIPYEVNKSSLVKRIDELRADKKVDGIVEVRDETDRTGLRIAIELKKDVNSESIKNYLYKNSDLQISYNFNMVAISDGRPKLMGIRQIIDSYLNHQIEVVANRTKFELDNAEKRMHIVEGLIKALSILDKVIELIRSSKNKRDAKENLIEVYEFTEEQAEAIVMLQLYRLTNTDIVALEGEHKELEALIKQLRHILDNHDALLNVIKEELNEIKKKFKSERLSLIEAEIEEIKIDKEVMVPSEEVILSMTRHGYIKRTSIRSYNASGVEDIGLKDGDSLLKHQEVNTQDTVLVFTNKGRYLFIPVHKLADIRWKELGQHVSQIVPIEEDEVVINVFNEKDFNTDAFYVFATQNGMIKKSTVPLFKTTRFNKPLIATKVKENDDLISVMRFEKDQLITIITNKGMSLTYNTSELSDTGLRAAGVKSINLKAEDFVVMTEGVSENDTILMATQRGSLKRISFKILQVAKRAQRGITLLKELKKNPHRIVAAHVVTGEHSQYTLYSKSNEEHGLINDIHKSEQYTNGSFIVDTDDFGEVIDMYIS.

Residues 31-495 form the Topo IIA-type catalytic domain; sequence LPDVRDGLKP…EIEEIKIDKE (465 aa). Tyr119 serves as the catalytic O-(5'-phospho-DNA)-tyrosine intermediate.

The protein belongs to the type II topoisomerase GyrA/ParC subunit family. ParC type 2 subfamily. In terms of assembly, heterotetramer composed of ParC and ParE.

It is found in the cell membrane. The enzyme catalyses ATP-dependent breakage, passage and rejoining of double-stranded DNA.. Topoisomerase IV is essential for chromosome segregation. It relaxes supercoiled DNA. Performs the decatenation events required during the replication of a circular DNA molecule. This is DNA topoisomerase 4 subunit A from Staphylococcus aureus (strain MRSA252).